We begin with the raw amino-acid sequence, 445 residues long: Phosphoglucosamine mutase (445 aa).

Ser-102 serves as the catalytic Phosphoserine intermediate. Positions 102, 241, 243, and 245 each coordinate Mg(2+). Ser-102 carries the post-translational modification Phosphoserine.

It belongs to the phosphohexose mutase family. Mg(2+) serves as cofactor. Activated by phosphorylation.

It carries out the reaction alpha-D-glucosamine 1-phosphate = D-glucosamine 6-phosphate. Functionally, catalyzes the conversion of glucosamine-6-phosphate to glucosamine-1-phosphate. The sequence is that of Phosphoglucosamine mutase from Shewanella sp. (strain W3-18-1).